The sequence spans 81 residues: Small serum protein 4 (81 aa).

A signal peptide spans 1 to 19 (MKVFFILIIFSFTLATCQG). Cystine bridges form between Cys21–Cys74, Cys41–Cys66, and Cys64–Cys73.

Belongs to the beta-microseminoprotein family.

Its subcellular location is the secreted. In terms of biological role, shows an slight inhibitory effect toward the metalloproteinase brevilysin H6, but does not inhibit the metalloproteinases thermolysin, HR1A and HR1B. This Protobothrops flavoviridis (Habu) protein is Small serum protein 4.